A 322-amino-acid chain; its full sequence is MSLPHAVTTALQHQQHQKQLQESSSDAWTNKCVDYVERIIRFYRTNDMSHLTPQMIMLINTIRDLCVESHPISVNVVKRFDSDENLIKHYSRLRKELGGSEVAENIFQPSFVYNVLPSYAQKFYNKGAENVSGDSVSEAAHELGEALQYQIAEAVASNTPIPLPVRHQLVNTYITLLLQRANIPPNVQDAVSSRKYPTLNIINDLINNVIDDVFTGVYGNYYYYVLNEKNRARIVTLKENIGFLAPLSASTDIFQYIANLATRAGKRPSLFQGATFLNAPSSNGSNVEQNRTSCQQSLTELAFQNEALRRYIFQKLSYKQNY.

Residues Asn-130, Asn-283, and Asn-290 are each glycosylated (N-linked (GlcNAc...) asparagine; by host).

It belongs to the baculoviridae gp41 family.

It is found in the virion. In Heliothis zea nuclear polyhedrosis virus (HzSNPV), this protein is Structural glycoprotein p40 (P40).